Here is a 176-residue protein sequence, read N- to C-terminus: Peptide deformylase (176 aa).

2 residues coordinate Fe cation: Cys-92 and His-134. Residue Glu-135 is part of the active site. Residue His-138 participates in Fe cation binding.

It belongs to the polypeptide deformylase family. The cofactor is Fe(2+).

The enzyme catalyses N-terminal N-formyl-L-methionyl-[peptide] + H2O = N-terminal L-methionyl-[peptide] + formate. Its function is as follows. Removes the formyl group from the N-terminal Met of newly synthesized proteins. Requires at least a dipeptide for an efficient rate of reaction. N-terminal L-methionine is a prerequisite for activity but the enzyme has broad specificity at other positions. This is Peptide deformylase from Acinetobacter baumannii (strain SDF).